A 209-amino-acid polypeptide reads, in one-letter code: Ribosomal RNA large subunit methyltransferase E (209 aa).

Residues glycine 63, tryptophan 65, aspartate 83, aspartate 99, and aspartate 124 each contribute to the S-adenosyl-L-methionine site. Lysine 164 acts as the Proton acceptor in catalysis.

This sequence belongs to the class I-like SAM-binding methyltransferase superfamily. RNA methyltransferase RlmE family.

The protein resides in the cytoplasm. It carries out the reaction uridine(2552) in 23S rRNA + S-adenosyl-L-methionine = 2'-O-methyluridine(2552) in 23S rRNA + S-adenosyl-L-homocysteine + H(+). Specifically methylates the uridine in position 2552 of 23S rRNA at the 2'-O position of the ribose in the fully assembled 50S ribosomal subunit. The chain is Ribosomal RNA large subunit methyltransferase E from Vibrio cholerae serotype O1 (strain ATCC 39541 / Classical Ogawa 395 / O395).